The primary structure comprises 328 residues: Tyrosine--tRNA ligase (328 aa).

Tyr33 provides a ligand contact to L-tyrosine. A 'HIGH' region motif is present at residues 38 to 46; sequence PSGVLHIGH. L-tyrosine contacts are provided by Tyr154, Gln158, Asp161, and Gln176. Residues 193-227 are disordered; that stretch reads EPPTSLHTPLIADLGTGRGKMSSSEGVTISMEDSR. The short motif at 212 to 216 is the 'KMSKS' region element; the sequence is KMSSS. Ser215 provides a ligand contact to ATP.

Belongs to the class-I aminoacyl-tRNA synthetase family. TyrS type 3 subfamily. Homodimer.

It is found in the cytoplasm. It catalyses the reaction tRNA(Tyr) + L-tyrosine + ATP = L-tyrosyl-tRNA(Tyr) + AMP + diphosphate + H(+). In terms of biological role, catalyzes the attachment of tyrosine to tRNA(Tyr) in a two-step reaction: tyrosine is first activated by ATP to form Tyr-AMP and then transferred to the acceptor end of tRNA(Tyr). This chain is Tyrosine--tRNA ligase, found in Halorubrum lacusprofundi (strain ATCC 49239 / DSM 5036 / JCM 8891 / ACAM 34).